Reading from the N-terminus, the 215-residue chain is Large ribosomal subunit protein bL25 (215 aa).

Residues 160–215 (GDLPLPEGSELVTEPEETVMSVVAPETEEEPDTEEDEEGEEDVEEESEEEEEESEE) form a disordered region. Residues 185-215 (ETEEEPDTEEDEEGEEDVEEESEEEEEESEE) are compositionally biased toward acidic residues.

It belongs to the bacterial ribosomal protein bL25 family. CTC subfamily. As to quaternary structure, part of the 50S ribosomal subunit; part of the 5S rRNA/L5/L18/L25 subcomplex. Contacts the 5S rRNA. Binds to the 5S rRNA independently of L5 and L18.

In terms of biological role, this is one of the proteins that binds to the 5S RNA in the ribosome where it forms part of the central protuberance. In Natranaerobius thermophilus (strain ATCC BAA-1301 / DSM 18059 / JW/NM-WN-LF), this protein is Large ribosomal subunit protein bL25.